Consider the following 243-residue polypeptide: Ribonuclease 3 (243 aa).

The RNase III domain occupies 10 to 146 (INRFRKRFDT…FIGALYLDQG (137 aa)). Glu-59 serves as a coordination point for Mg(2+). The active site involves Asp-63. Positions 132 and 135 each coordinate Mg(2+). Glu-135 is a catalytic residue. A DRBM domain is found at 172 to 241 (DFKTQFQEYV…AESAYKQLKQ (70 aa)). The segment covering 219–231 (GKGKTKKESEQRA) has biased composition (basic and acidic residues). A disordered region spans residues 219-243 (GKGKTKKESEQRAAESAYKQLKQIK).

The protein belongs to the ribonuclease III family. As to quaternary structure, homodimer. The cofactor is Mg(2+).

It localises to the cytoplasm. It catalyses the reaction Endonucleolytic cleavage to 5'-phosphomonoester.. Its function is as follows. Digests double-stranded RNA. Involved in the processing of primary rRNA transcript to yield the immediate precursors to the large and small rRNAs (23S and 16S). Processes some mRNAs, and tRNAs when they are encoded in the rRNA operon. Processes pre-crRNA and tracrRNA of type II CRISPR loci if present in the organism. The protein is Ribonuclease 3 of Staphylococcus aureus (strain bovine RF122 / ET3-1).